A 345-amino-acid polypeptide reads, in one-letter code: Ferrochelatase (345 aa).

Residues His-215 and Glu-296 each contribute to the Fe cation site.

The protein belongs to the ferrochelatase family.

It localises to the cytoplasm. The enzyme catalyses heme b + 2 H(+) = protoporphyrin IX + Fe(2+). The protein operates within porphyrin-containing compound metabolism; protoheme biosynthesis; protoheme from protoporphyrin-IX: step 1/1. In terms of biological role, catalyzes the ferrous insertion into protoporphyrin IX. The sequence is that of Ferrochelatase from Nitrobacter hamburgensis (strain DSM 10229 / NCIMB 13809 / X14).